A 65-amino-acid polypeptide reads, in one-letter code: UPF0434 protein Rpal_0270 (65 aa).

This sequence belongs to the UPF0434 family.

The protein is UPF0434 protein Rpal_0270 of Rhodopseudomonas palustris (strain TIE-1).